The following is a 243-amino-acid chain: Tubulin-folding cofactor B (243 aa).

The region spanning 181-223 (RAESLGPGYWVGIQYDEPLGKHDGMVKGTRFFECPRLQGGMVR) is the CAP-Gly domain.

The protein belongs to the TBCB family. Supercomplex made of cofactors A to E. Cofactors A and D function by capturing and stabilizing tubulin in a quasi-native conformation. Cofactor E binds to the cofactor D-tubulin complex; interaction with cofactor C then causes the release of tubulin polypeptides that are committed to the native state. Interacts with TUBA6. As to expression, expressed in roots, stems, leaves, flowers and siliques.

It localises to the cytoplasm. In terms of biological role, involved in control of cell division. Regulates probably the availability of alpha-tubulin for dimerization of alpha-/beta-tubulin, which is required for proper microtubule biogenesis. Decreased expression of TFCB results in enlarged mesophyll cells and leaf epidermal cells with bulged nuclei, increased ploidy and increased numbers of spindles and phragmoplasts. The sequence is that of Tubulin-folding cofactor B (TFCB) from Arabidopsis thaliana (Mouse-ear cress).